Here is a 302-residue protein sequence, read N- to C-terminus: MNPTAIFDYLQGLQTRIVEAIELVDGKRFLHDSWQRAEGGGGTSCMLEEGNVFERAGIGFSHVIGNKLPPSASVAHPEAAGRSWQAMGVSLVFHPRNPYVPTVHMNVRFFVAEKPGEEPIWWFGGGMDLTPYYGFEEDAVHFHRTCRDAVAPFGEQYYPRFKKECDDYFYLKHRKEARGIGGIFFDDFNELGFEQSFAFQRSVGDAFINAYLPIVQRRKDIPYSERERDFQAYRRGRYVEFNLIYDRGTIFGLQSNGRTESILLSMPPIVKWRYDWKPEAGSPEARLYSDFITGRDWLTEHK.

Ser90 is a binding site for substrate. A divalent metal cation-binding residues include His94 and His104. His104 functions as the Proton donor in the catalytic mechanism. 106–108 (NVR) serves as a coordination point for substrate. 2 residues coordinate a divalent metal cation: His143 and His173. An important for dimerization region spans residues 238 to 273 (YVEFNLIYDRGTIFGLQSNGRTESILLSMPPIVKWR).

It belongs to the aerobic coproporphyrinogen-III oxidase family. In terms of assembly, homodimer. It depends on a divalent metal cation as a cofactor.

The protein resides in the cytoplasm. It carries out the reaction coproporphyrinogen III + O2 + 2 H(+) = protoporphyrinogen IX + 2 CO2 + 2 H2O. It participates in porphyrin-containing compound metabolism; protoporphyrin-IX biosynthesis; protoporphyrinogen-IX from coproporphyrinogen-III (O2 route): step 1/1. Involved in the heme biosynthesis. Catalyzes the aerobic oxidative decarboxylation of propionate groups of rings A and B of coproporphyrinogen-III to yield the vinyl groups in protoporphyrinogen-IX. This Methylobacillus flagellatus (strain ATCC 51484 / DSM 6875 / VKM B-1610 / KT) protein is Oxygen-dependent coproporphyrinogen-III oxidase.